The chain runs to 1324 residues: MTIVDKASESSDPSAYQNQPGSSEAVSPGDMDAGSASWGAVSSLNDVSNHTLSLGPVPGAVVYSSSSVPDKSKPSPQKDQALGDGIAPPQKVLFPSEKICLKWQQTHRVGAGLQNLGNTCFANAALQCLTYTPPLANYMLSHEHSKTCHAEGFCMMCTMQAHITQALSNPGDVIKPMFVINEMRRIARHFRFGNQEDAHEFLQYTVDAMQKACLNGSNKLDRHTQATTLVCQIFGGYLRSRVKCLNCKGVSDTFDPYLDITLEIKAAQSVNKALEQFVKPEQLDGENSYKCSKCKKMVPASKRFTIHRSSNVLTLSLKRFANFTGGKIAKDVKYPEYLDIRPYMSQPNGEPIVYVLYAVLVHTGFNCHAGHYFCYIKASNGLWYQMNDSIVSTSDIRSVLSQQAYVLFYIRSHDVKNGGELTHPTHSPGQSSPRPVISQRVVTNKQAAPGFIGPQLPSHMIKNPPHLNGTGPLKDTPSSSMSSPNGNSSVNRASPVNASASVQNWSVNRSSVIPEHPKKQKITISIHNKLPVRQCQSQPNLHSNSLENPTKPVPSSTITNSAVQSTSNASTMSVSSKVTKPIPRSESCSQPVMNGKSKLNSSVLVPYGAESSEDSDEESKGLGKENGIGTIVSSHSPGQDAEDEEATPHELQEPMTLNGANSADSDSDPKENGLAPDGASCQGQPALHSENPFAKANGLPGKLMPAPLLSLPEDKILETFRLSNKLKGSTDEMSAPGAERGPPEDRDAEPQPGSPAAESLEEPDAAAGLSSTKKAPPPRDPGTPATKEGAWEAMAVAPEEPPPSAGEDIVGDTAPPDLCDPGSLTGDASPLSQDAKGMIAEGPRDSALAEAPEGLSPAPPARSEEPCEQPLLVHPSGDHARDAQDPSQSLGAPEAAERPPAPVLDMAPAGHPEGDAEPSPGERVEDAAAPKAPGPSPAKEKIGSLRKVDRGHYRSRRERSSSGEPARESRSKTEGHRHRRRRTCPRERDRQDRHAPEHHPGHGDRLSPGERRSLGRCSHHHSRHRSGVELDWVRHHYTEGERGWGREKFYPDRPRWDRCRYYHDRYALYAARDWKPFHGGREHERAGLHERPHKDHNRGRRGCEPARERERHRPSSPRAGAPHALAPHPDRFSHDRTALVAGDNCNLSDRFHEHENGKSRKRRHDSVENSDSHVEKKARRSEQKDPLEEPKAKKHKKSKKKKKSKDKHRDRDSRHQQDSDLSAACSDADLHRHKKKKKKKKRHSRKSEDFVKDSELHLPRVTSLETVAQFRRAQGGFPLSGGPPLEGVGPFREKTKHLRMESRDDRCRLFEYGQGKRRYLELGR.

Disordered regions lie at residues 1 to 38 (MTIV…SASW) and 63 to 87 (YSSS…DGIA). The span at 10 to 25 (SSDPSAYQNQPGSSEA) shows a compositional bias: polar residues. The segment covering 63–80 (YSSSSVPDKSKPSPQKDQ) has biased composition (low complexity). Ser-75 is subject to Phosphoserine. A USP domain is found at 111-412 (AGLQNLGNTC…QAYVLFYIRS (302 aa)). Cys-120 serves as the catalytic Nucleophile. His-371 serves as the catalytic Proton acceptor. Disordered regions lie at residues 452–494 (IGPQ…NRAS), 536–707 (QSQP…MPAP), 722–1026 (LSNK…RHRS), 1085–1131 (RAGL…HPDR), 1149–1254 (DRFH…VKDS), and 1275–1294 (GGFP…FREK). The segment covering 477-489 (PSSSMSSPNGNSS) has biased composition (low complexity). Ser-483 carries the post-translational modification Phosphoserine. Over residues 536–564 (QSQPNLHSNSLENPTKPVPSSTITNSAVQ) the composition is skewed to polar residues. The span at 565–576 (STSNASTMSVSS) shows a compositional bias: low complexity. The segment covering 586 to 603 (ESCSQPVMNGKSKLNSSV) has biased composition (polar residues). Phosphoserine is present on residues Ser-754 and Ser-856. 5 stretches are compositionally biased toward basic and acidic residues: residues 938-974 (AKEK…SKTE), 984-1013 (CPRE…ERRS), 1101-1113 (RGCE…ERHR), 1149-1158 (DRFHEHENGK), and 1165-1191 (DSVE…EEPK). Position 1181 is a phosphoserine (Ser-1181). Positions 1192 to 1206 (AKKHKKSKKKKKSKD) are enriched in basic residues. Basic and acidic residues predominate over residues 1207 to 1218 (KHRDRDSRHQQD). Residues Ser-1219, Ser-1222, and Ser-1226 each carry the phosphoserine modification. Basic residues predominate over residues 1231–1245 (HRHKKKKKKKKRHSR). Ser-1247 carries the phosphoserine modification.

Belongs to the peptidase C19 family. In terms of tissue distribution, broadly expressed.

The catalysed reaction is Thiol-dependent hydrolysis of ester, thioester, amide, peptide and isopeptide bonds formed by the C-terminal Gly of ubiquitin (a 76-residue protein attached to proteins as an intracellular targeting signal).. Functionally, deubiquitinating enzyme which may play an important role during spermatogenesis. This Homo sapiens (Human) protein is Ubiquitin carboxyl-terminal hydrolase 42 (USP42).